Reading from the N-terminus, the 483-residue chain is Jacalin-related lectin 13 (483 aa).

Positions 1 to 20 are disordered; sequence MTQKLESVGSERKSSEYMWD. 3 consecutive Jacalin-type lectin domains span residues 2–147, 150–295, and 307–461; these read TQKL…YVTW, PARM…YFTT, and FREK…YFFP.

This sequence belongs to the jacalin lectin family.

This Arabidopsis thaliana (Mouse-ear cress) protein is Jacalin-related lectin 13 (JAL13).